We begin with the raw amino-acid sequence, 355 residues long: Uroporphyrinogen decarboxylase (355 aa).

Substrate contacts are provided by residues 27-31 (RQAGR), D77, Y154, T209, and H328.

It belongs to the uroporphyrinogen decarboxylase family. Homodimer.

Its subcellular location is the cytoplasm. The enzyme catalyses uroporphyrinogen III + 4 H(+) = coproporphyrinogen III + 4 CO2. It participates in porphyrin-containing compound metabolism; protoporphyrin-IX biosynthesis; coproporphyrinogen-III from 5-aminolevulinate: step 4/4. Catalyzes the decarboxylation of four acetate groups of uroporphyrinogen-III to yield coproporphyrinogen-III. The chain is Uroporphyrinogen decarboxylase from Aliivibrio salmonicida (strain LFI1238) (Vibrio salmonicida (strain LFI1238)).